The chain runs to 313 residues: Solute carrier family 25 member 36 (313 aa).

3 Solcar repeats span residues 4–110 (RDTL…CKEK), 118–205 (DSTQ…IKRK), and 226–310 (SDFV…VVYL). Helical transmembrane passes span 7-27 (LVHL…TCPL), 41-57 (LYIS…ASVN), 113-133 (NIFN…AGFT), 182-202 (MSAS…YESI), 228-248 (FVGM…IAYP), and 293-313 (QIPN…LLDG).

This sequence belongs to the mitochondrial carrier (TC 2.A.29) family.

The protein resides in the mitochondrion inner membrane. Its function is as follows. Mitochondrial transporter that imports/exports pyrimidine nucleotides into and from mitochondria. Transports preferentially cytosine and uracil (deoxy)nucleoside mono-, di-, and triphosphates by uniport and antiport mechanism. In Gallus gallus (Chicken), this protein is Solute carrier family 25 member 36 (SLC25A36).